The chain runs to 63 residues: Large ribosomal subunit protein uL30 (63 aa).

Belongs to the universal ribosomal protein uL30 family. Part of the 50S ribosomal subunit.

This chain is Large ribosomal subunit protein uL30, found in Caulobacter sp. (strain K31).